The primary structure comprises 756 residues: Inactive carboxypeptidase-like protein X2 (756 aa).

Residues 1–25 form the signal peptide; it reads MSRPGTATPALALVLLAVTLAGVGA. The segment at 51 to 131 is disordered; that stretch reads EPELETFSPP…DHSVRVARED (81 aa). Over residues 68–78 the composition is skewed to basic and acidic residues; it reads EWERRPQEPRP. Residues 79-90 show a composition bias toward basic residues; sequence PKRATKPKKAPK. Basic and acidic residues predominate over residues 113–131; that stretch reads KSSEKAANDDHSVRVARED. Residues 134-293 enclose the F5/8 type C domain; the sequence is ESCPPLGLET…ICMRMEILGC (160 aa). The cysteines at positions 136 and 293 are disulfide-linked. 5 N-linked (GlcNAc...) asparagine glycosylation sites follow: Asn-231, Asn-241, Asn-281, Asn-337, and Asn-491. Residues 317–640 form the Peptidase M14 domain; sequence KHHNYKEMRQ…ESLIVFMEQV (324 aa).

It belongs to the peptidase M14 family.

It localises to the secreted. May be involved in cell-cell interactions. This is Inactive carboxypeptidase-like protein X2 (CPXM2) from Homo sapiens (Human).